Here is a 515-residue protein sequence, read N- to C-terminus: Nectin-1 (515 aa).

Positions methionine 1 to threonine 30 are cleaved as a signal peptide. The Ig-like V-type domain occupies glutamine 31–threonine 141. Topologically, residues glutamine 31–alanine 355 are extracellular. Residues asparagine 36, asparagine 72, asparagine 139, asparagine 202, asparagine 286, asparagine 297, asparagine 307, and asparagine 332 are each glycosylated (N-linked (GlcNAc...) asparagine). Cysteines 51 and 124 form a disulfide. Ig-like C2-type domains lie at lysine 145–valine 243 and proline 247–threonine 334. Disulfide bonds link cysteine 172–cysteine 226 and cysteine 269–cysteine 316. The tract at residues tryptophan 282–threonine 299 is interaction with FGFR. Residues isoleucine 356–valine 376 traverse the membrane as a helical segment. The Cytoplasmic segment spans residues alanine 377–valine 515. The segment at tyrosine 400–tyrosine 486 is disordered. Residues serine 422, serine 434, and serine 435 each carry the phosphoserine modification. Tyrosine 436 carries the phosphotyrosine modification. A compositionally biased stretch (acidic residues) spans tyrosine 436 to glycine 445. Positions glycine 446–arginine 464 are enriched in basic and acidic residues. Position 509 is a phosphoserine (serine 509).

Belongs to the nectin family. As to quaternary structure, (Microbial infection) Interacts with herpes pseudorabies virus/PRV envelope glycoprotein D.

It localises to the cell membrane. The protein localises to the cell junction. It is found in the adherens junction. The protein resides in the presynaptic cell membrane. Its function is as follows. (Microbial infection) Acts as a receptor for herpes simplex virus 1/HHV-1, herpes simplex virus 2/HHV-2, and pseudorabies virus/PRV. The polypeptide is Nectin-1 (Sus scrofa (Pig)).